The following is a 1615-amino-acid chain: Regulating synaptic membrane exocytosis protein 1 (1615 aa).

A disordered region spans residues 1-26; that stretch reads MSSAVGPRGPRPPTVPPPMQELPDLS. Residues 9 to 20 are compositionally biased toward pro residues; sequence GPRPPTVPPPMQ. A RabBD domain is found at 22–205; the sequence is LPDLSHLTEE…TKSGAWFFGS (184 aa). The FYVE-type zinc finger occupies 133-193; sequence KDDAPTCGIC…VCNLCRKQQE (61 aa). Zn(2+) contacts are provided by Cys139, Cys142, Cys155, Cys158, Cys163, Cys166, Cys185, and Cys188. Positions 205 to 569 are disordered; that stretch reads SGPQQPSQDG…CEDVELESES (365 aa). Polar residues predominate over residues 206 to 222; that stretch reads GPQQPSQDGTLSDTATG. A compositionally biased stretch (basic and acidic residues) spans 227–240; that stretch reads VPREKKARLQERSR. Polar residues predominate over residues 241–256; it reads SQTPLSTAAVSSQDTA. Over residues 327-379 the composition is skewed to basic and acidic residues; the sequence is ADERERKERRETRRLEKGRSQDYSDRPEKRDNGRVAEDQKQRKEEEYQTRYRS. Over residues 399 to 410 the composition is skewed to basic residues; it reads MHARVSRARHER. Positions 421–459 are enriched in low complexity; that stretch reads EAAAAAPAEATAGKRAPATARVSPPESPRARAAAAQPPT. Residues 460–475 show a composition bias toward pro residues; the sequence is EHGPPPPRPAPGPAEP. Residues 476–489 show a composition bias toward basic and acidic residues; that stretch reads PEPRVPEPLRKQGR. The segment covering 511 to 523 has biased composition (polar residues); sequence RNDSLSSDQSESV. Ser514 carries the phosphoserine modification. Residues 529–541 show a composition bias toward basic residues; it reads KPHRPKRGGKRRQ. Residues 559 to 569 show a composition bias toward acidic residues; it reads SCEDVELESES. Ser592 carries the phosphoserine modification. The PDZ domain occupies 619–705; that stretch reads RTTMPKESGA…EPQVEIIVSR (87 aa). Positions 712–746 are disordered; it reads RIPESSHPPLESSSSSFESQKMERPSISVISPTSP. Residues 714–730 show a composition bias toward low complexity; that stretch reads PESSHPPLESSSSSFES. Residues Ser742 and Ser745 each carry the phosphoserine modification. In terms of domain architecture, C2 1 spans 756–879; the sequence is LPGQLSVKLW…ALLDDEPHWY (124 aa). The interval 884–1201 is disordered; sequence HDESSLPLPQ…RQLPQVPVRS (318 aa). Ser895 carries the post-translational modification Phosphoserine. Residues 949-958 are compositionally biased toward polar residues; that stretch reads ATTLTVPEQQ. Ser991 bears the Phosphoserine mark. The span at 1006 to 1023 shows a compositional bias: basic and acidic residues; that stretch reads RHHDASRSPADHRSRHVE. Ser1045 carries the post-translational modification Phosphoserine. Positions 1078–1092 are enriched in basic and acidic residues; that stretch reads SPERERHSRKSERCS. Over residues 1173 to 1187 the composition is skewed to polar residues; that stretch reads QGSPTQSPPADTSFG. Ser1175 is subject to Phosphoserine. At Thr1177 the chain carries Phosphothreonine. 7 positions are modified to phosphoserine: Ser1179, Ser1231, Ser1233, Ser1234, Ser1262, Ser1263, and Ser1265. Residues 1256-1313 are disordered; it reads DNASAKSSDSDVSDVSAISRASSTSRLSSTSFMSEQSERPRGRISSFTPKMQGRRMGT. Residues 1268 to 1289 show a composition bias toward low complexity; the sequence is SDVSAISRASSTSRLSSTSFMS. Ser1339 is modified (phosphoserine). Residues 1368 to 1397 form a disordered region; that stretch reads RSRSTSQLSQTESGHKKLKSTIQRSTETGM. The C2 2 domain occupies 1461 to 1579; sequence AMGDIQIGME…DLSSMVIGWY (119 aa). A phosphoserine mark is found at Ser1600, Ser1603, Ser1606, and Ser1615.

As to quaternary structure, interacts with RAB3C, RAB10, RAB26 and RAB37. Binds SNAP25, SYT1 and CACNA1B. Interaction with SYT1 is enhanced by calcium ions. Interaction with SNAP25 is weaker in the presence of calcium ions. Binds RAB3A, RAB3B and RAB3D that have been activated by GTP-binding. Binds UNC13A. Interacts with TSPOAP1 and RIMBP2. Interacts with PPFIA3 and PPFIA4. Interacts with ERC1. Post-translationally, phosphorylated by BRSK1. In terms of tissue distribution, highly expressed in hippocampus, brain cortex, cerebellum and olfactory bulb. Detected at lower levels in midbrain, hindbrain and spinal cord. Detected retina and in spinal cord motor neurons.

The protein resides in the cell membrane. The protein localises to the synapse. Its subcellular location is the presynaptic cell membrane. Rab effector involved in exocytosis. May act as scaffold protein that regulates neurotransmitter release at the active zone. Essential for maintaining normal probability of neurotransmitter release and for regulating release during short-term synaptic plasticity. Plays a role in dendrite formation by melanocytes. In Rattus norvegicus (Rat), this protein is Regulating synaptic membrane exocytosis protein 1 (Rims1).